The chain runs to 283 residues: BTB/POZ domain-containing protein KCTD15 (283 aa).

A disordered region spans residues 1–32 (MPHRKERPSGSSLHTHGSTGTAEGGNMSRLSL). Residues 9-21 (SGSSLHTHGSTGT) are compositionally biased toward low complexity. 3 positions are modified to phosphoserine: Ser-31, Ser-35, and Ser-38. A BTB domain is found at 56 to 126 (APVHIDVGGH…LRTSKLLLPD (71 aa)).

Forms oligomers, predominantly homopentamers. Interacts with KCTD1, probably forming heteropentamers depending on its abundance in a cell-type dependent manner. Interacts with TFAP2A; this interaction inhibits TFAP2A transcriptional activation.

Its subcellular location is the nucleus. Its function is as follows. During embryonic development, it is involved in neural crest formation. Inhibits AP2 transcriptional activity by interaction with its activation domain. This is BTB/POZ domain-containing protein KCTD15 (KCTD15) from Homo sapiens (Human).